A 517-amino-acid chain; its full sequence is FAD-dependent monooxygenase dmxR9 (517 aa).

Positions 96 and 162 each coordinate FAD. Catalysis depends on residues arginine 243 and tyrosine 270. Residues aspartate 365 and alanine 378 each contribute to the FAD site.

Belongs to the paxM FAD-dependent monooxygenase family. It depends on FAD as a cofactor.

It participates in secondary metabolite biosynthesis. FAD-dependent monooxygenase; part of the gene cluster that mediates the biosynthesis of the dimeric xanthones cryptosporioptides. The pathway begins with the synthesis of atrochrysone thioester by the polyketide synthase dmx-nrPKS. The atrochrysone carboxyl ACP thioesterase dmxR1 then breaks the thioester bond and releases the atrochrysone carboxylic acid from dmx-nrPKS. Atrochrysone carboxylic acid is decarboxylated by the decarboxylase dmxR15, and oxidized by the anthrone oxygenase dmxR16 to yield emodin. Emodin is then reduced to emodin hydroquinone by the oxidoreductase dmxR7. A-ring reduction by the short chain dehydrogenase dmxR18, dehydration by the scytalone dehydratase-like protein dmxR17 and probable spontaneous re-oxidation, results in overall deoxygenation to chrysophanol. Baeyer-Villiger oxidation by the Baeyer-Villiger monooxygenase (BVMO) dmxR6 then yields monodictylactone in equilibrium with monodictyphenone. In the case of the cryptosporioptides biosynthesis, monodictylactone is reduced at C-12 to an alcohol (by the short chain dehydrogenases dmxR12 or dmxR8) and hydroxylated at C-5 by dmxR9, yielding the electron-rich aromatic which could eliminate H(2)O to form the ortho-quinonemethide, followed by tautomerisation to paraquinone and complete the formal reduction to produce the 10-methylgroup. Conjugate addition of C-4a-OH to the resulting paraquinone by the monooxygenase dmxR10 then gives cyclohexadienone, which is then reduced at C-5 by the short chain dehydrogenase dmxR3 to give the dihydroxanthone. The 6,7-epoxide in the cryptosporioptides could be introduced by the cytochrome P450 monooxygenase dmxL3. The highly reducing PKS dmxL2 manufactures butyrate, which is further carboxylated by dmxL1 to form ethylmalonate. It is not yet clear whether the carboxylation occurs while the butyrate is attached to the ACP of dmxL2, but this unusual fungal metabolite could then be esterified to O-5 by the O-acetyltransferase dmxR13. Finally, dimerization performed by dmxR5 gives the observed dimers cryptosporioptides A, B and C as the final products of the pathway. This is FAD-dependent monooxygenase dmxR9 from Cryptosporiopsis sp. (strain 8999).